A 101-amino-acid polypeptide reads, in one-letter code: NAD(P)H-quinone oxidoreductase subunit 4L, chloroplastic (101 aa).

3 consecutive transmembrane segments (helical) span residues 2 to 22 (MFEHVLFLSVYLFSIGIYGLI), 32 to 52 (ICLELILNSINLNLVTFSDLF), and 61 to 81 (IFAIFVIALAAAEAAIGLSIL).

The protein belongs to the complex I subunit 4L family. In terms of assembly, NDH is composed of at least 16 different subunits, 5 of which are encoded in the nucleus.

The protein localises to the plastid. It is found in the chloroplast thylakoid membrane. The enzyme catalyses a plastoquinone + NADH + (n+1) H(+)(in) = a plastoquinol + NAD(+) + n H(+)(out). It carries out the reaction a plastoquinone + NADPH + (n+1) H(+)(in) = a plastoquinol + NADP(+) + n H(+)(out). Its function is as follows. NDH shuttles electrons from NAD(P)H:plastoquinone, via FMN and iron-sulfur (Fe-S) centers, to quinones in the photosynthetic chain and possibly in a chloroplast respiratory chain. The immediate electron acceptor for the enzyme in this species is believed to be plastoquinone. Couples the redox reaction to proton translocation, and thus conserves the redox energy in a proton gradient. The polypeptide is NAD(P)H-quinone oxidoreductase subunit 4L, chloroplastic (Oryza nivara (Indian wild rice)).